The chain runs to 405 residues: Tryptophan synthase beta chain (405 aa).

K98 is modified (N6-(pyridoxal phosphate)lysine).

The protein belongs to the TrpB family. As to quaternary structure, tetramer of two alpha and two beta chains. Pyridoxal 5'-phosphate serves as cofactor.

It catalyses the reaction (1S,2R)-1-C-(indol-3-yl)glycerol 3-phosphate + L-serine = D-glyceraldehyde 3-phosphate + L-tryptophan + H2O. It participates in amino-acid biosynthesis; L-tryptophan biosynthesis; L-tryptophan from chorismate: step 5/5. Functionally, the beta subunit is responsible for the synthesis of L-tryptophan from indole and L-serine. This is Tryptophan synthase beta chain from Xanthomonas oryzae pv. oryzae (strain PXO99A).